The sequence spans 1826 residues: Transcription initiation factor TFIID subunit 1-like (1826 aa).

Disordered stretches follow at residues Asp118–Asp141, Ile532–Lys555, and Arg1252–Arg1276. The segment covering Arg1252–Lys1268 has biased composition (basic and acidic residues). The Nuclear localization signal signature appears at Pro1370–Val1377. Bromo domains lie at Arg1395–Lys1503 and Leu1517–Tyr1626. Positions Ala1648–Lys1826 are disordered. A compositionally biased stretch (polar residues) spans Pro1660–Pro1700. Acidic residues-rich tracts occupy residues Glu1714 to Asp1729, Gly1740 to Gly1750, and Glu1768 to Asp1783. A compositionally biased stretch (polar residues) spans Ser1787–Asp1797. The span at Ser1817–Lys1826 shows a compositional bias: basic and acidic residues.

This sequence belongs to the TAF1 family. Can bind directly to TATA-box binding protein (TBP). Interacts (via bromo domains) with acetylated lysine residues on the N-terminus of histone H1.4, H2A, H2B, H3 and H4 (in vitro). As to expression, testis specific, expressed apparently in germ cells.

The protein localises to the nucleus. In terms of biological role, may act as a functional substitute for TAF1/TAFII250 during male meiosis, when sex chromosomes are transcriptionally silenced. The chain is Transcription initiation factor TFIID subunit 1-like (TAF1L) from Homo sapiens (Human).